The primary structure comprises 285 residues: Nucleotide-binding protein PFLU_0879 (285 aa).

ATP is bound at residue 8–15 (GRSGSGKS). 60–63 (DARN) is a binding site for GTP.

This sequence belongs to the RapZ-like family.

Functionally, displays ATPase and GTPase activities. The chain is Nucleotide-binding protein PFLU_0879 from Pseudomonas fluorescens (strain SBW25).